A 450-amino-acid polypeptide reads, in one-letter code: Exodeoxyribonuclease 7 large subunit (450 aa).

It belongs to the XseA family. As to quaternary structure, heterooligomer composed of large and small subunits.

It localises to the cytoplasm. It catalyses the reaction Exonucleolytic cleavage in either 5'- to 3'- or 3'- to 5'-direction to yield nucleoside 5'-phosphates.. Functionally, bidirectionally degrades single-stranded DNA into large acid-insoluble oligonucleotides, which are then degraded further into small acid-soluble oligonucleotides. The chain is Exodeoxyribonuclease 7 large subunit from Listeria monocytogenes serovar 1/2a (strain ATCC BAA-679 / EGD-e).